Consider the following 2495-residue polypeptide: Non-reducing polyketide synthase adrD (2495 aa).

Residues 14-252 (VVFGPQSSEI…HHSRHVTAVQ (239 aa)) are N-terminal acylcarrier protein transacylase domain (SAT). The Ketosynthase family 3 (KS3) domain occupies 386-807 (VIPIAITGMG…GSNAALVVKQ (422 aa)). Active-site for beta-ketoacyl synthase activity residues include cysteine 551, histidine 686, and histidine 725. The tract at residues 913–1222 (LCFGGQNGNE…QALDLGGALA (310 aa)) is malonyl-CoA:ACP transacylase (MAT) domain. Serine 1000 functions as the For acyl/malonyl transferase activity in the catalytic mechanism. Residues 1294–1422 (KEFVQLLTKQ…GEISLHPFGQ (129 aa)) form an N-terminal hotdog fold region. Residues 1294–1601 (KEFVQLLTKQ…FTSVSIAGLS (308 aa)) form the PKS/mFAS DH domain. The tract at residues 1295–1600 (EFVQLLTKQP…TFTSVSIAGL (306 aa)) is product template (PT) domain. The active-site Proton acceptor; for dehydratase activity is histidine 1325. The segment at 1450-1601 (ESSGLKGFAV…FTSVSIAGLS (152 aa)) is C-terminal hotdog fold. Aspartate 1508 serves as the catalytic Proton donor; for dehydratase activity. Positions 1651–1725 (SGHFMVVQEM…TLVQTIFPDA (75 aa)) constitute a Carrier domain. Serine 1685 is modified (O-(pantetheine 4'-phosphoryl)serine). The interval 1887–2120 (QHTSEHNLLR…GFQWVDWTYN (234 aa)) is methyltransferase (CMeT) domain. Residues 2150-2495 (YLMNEETIVY…YEFLRDHVRY (346 aa)) form a thioesterase (TE) domain region. Catalysis depends on for thioesterase activity residues serine 2273 and aspartate 2432.

The enzyme catalyses 3 malonyl-CoA + acetyl-CoA + 2 S-adenosyl-L-methionine = 3,5-dimethylorsellinate + 2 S-adenosyl-L-homocysteine + 3 CO2 + 4 CoA. The protein operates within secondary metabolite biosynthesis; terpenoid biosynthesis. Its function is as follows. Non-reducing polyketide synthase; part of the gene cluster that mediates the biosynthesis of andrastins, meroterpenoid compounds that exhibit inhibitory activity against ras farnesyltransferase, suggesting that they could be promising leads for antitumor agents. The first step of the pathway is the synthesis of 3,5-dimethylorsellinic acid (DMOA) by the polyketide synthase adrD via condensation of one acetyl-CoA starter unit with 3 malonyl-CoA units and 2 methylations. DMAO is then converted to farnesyl-DMAO by the prenyltransferase adrG. The methyltransferase adrK catalyzes the methylation of the carboxyl group of farnesyl-DMAO to farnesyl-DMAO methyl ester which is further converted to epoxyfarnesyl-DMAO methyl ester by the FAD-dependent monooxygenase adrH. The terpene cyclase adrI then catalyzes the carbon skeletal rearrangement to generate the andrastin E, the first compound in the pathway having the andrastin scaffold, with the tetracyclic ring system. The post-cyclization tailoring enzymes adrF, adrE, adrJ, and adrA, are involved in the conversion of andrastin E into andrastin A. The short chain dehydrogenase adrF is responsible for the oxidation of the C-3 a hydroxyl group of andrastin E to yield the corresponding ketone, andrastin D. The ketoreductase adrE stereoselectively reduces the carbonyl moiety to reverse the stereochemistry of the C-3 position to yield andrastin F. The acetyltransferase adrJ is the acetyltransferase that attaches the acetyl group to the C-3 hydroxyl group of andrastin F to yield andrastin C. Finally, the cytochrome P450 monooxygenase adrA catalyzes two sequential oxidation reactions of the C-23 methyl group, to generate the corresponding alcohol andrastin B, and aldehyde andrastin A. This is Non-reducing polyketide synthase adrD from Penicillium roqueforti.